The sequence spans 600 residues: MENSDSNDKGSDQSAAQRRSQMDRLDREEAFYQFVNNLSEEDYRLMRDNNLLGTPGESTEEELLRRLQQIKEGPPPQSPDENRAGESSDDVTNSDSIIDWLNSVRQTGNTTRSGQRGNQSWRAVSRTNPNSGDFRFSLEINVNRNNGSQTSENESEPSTRRLSVENMESSSQRQMENSASESASARPSRAERNSAEAVTEVPTTRAQRRARSRSPEHRRTRARAERSRSPLQPTSEIPRRAPTLEQSSENEPEGSSRTRHHVTLRQQISGPELLGRGLFAASGSRNPSQGTSSSDTGSNSESSGSGQRPPTIVLDLQVRRVRPGEYRQRDSIASRTRSRSQAPNNTVTYESERGGFRRTFSRSERAGVRTYVSTIRIPIRRILNTGLSETTSVAIQTMLRQIMTGFGELSYFMYSDSDSEPSASVSSRNVERVESRNGRGSSGGGNSSGSSSSSSPSPSSSGESSESSSEMFEGSSEGGSSGPSRRDGRHRAPVTFDESGSLPFLSLAQFFLLNEDDEDQPRGLTKEQIDNLAMRSFGENDALKTCSVCITEYTEGNKLRKLPCSHEYHVHCIDRWLSENSTCPICRRAVLSSGNRESVV.

Met-1 bears the N-acetylmethionine mark. A compositionally biased stretch (basic and acidic residues) spans 1-11 (MENSDSNDKGS). 3 disordered regions span residues 1–24 (MENS…QMDR), 49–355 (NNLL…ERGG), and 417–497 (SDSE…VTFD). Polar residues-rich tracts occupy residues 103–131 (SVRQ…NPNS) and 140–152 (INVN…QTSE). At Ser-163 the chain carries Phosphoserine. Positions 166-175 (NMESSSQRQM) are enriched in polar residues. The span at 176-187 (ENSASESASARP) shows a compositional bias: low complexity. 3 positions are modified to phosphoserine: Ser-194, Ser-227, and Ser-229. Residues 213–228 (RSPEHRRTRARAERSR) show a composition bias toward basic and acidic residues. Polar residues predominate over residues 244 to 255 (LEQSSENEPEGS). Ser-269 carries the phosphoserine modification. The segment covering 288–306 (SQGTSSSDTGSNSESSGSG) has biased composition (low complexity). Residues 322-332 (RPGEYRQRDSI) are compositionally biased toward basic and acidic residues. A compositionally biased stretch (polar residues) spans 333 to 349 (ASRTRSRSQAPNNTVTY). Residues 448–475 (SGSSSSSSPSPSSSGESSESSSEMFEGS) show a composition bias toward low complexity. The segment at 546 to 587 (CSVCITEYTEGNKLRKLPCSHEYHVHCIDRWLSENSTCPICR) adopts an RING-type zinc-finger fold. A PDZ-binding motif is present at residues 597 to 600 (ESVV).

The protein belongs to the RNF12 family. In terms of assembly, interacts (via N-terminus) with TERF1. Interacts (via C-terminus) with ESR1. Interacts with LIM/homeobox factors such as LHX3. Interacts with LDB1, LDB2 and SIN3A. Interacts with LIMK1.

The protein resides in the nucleus. It catalyses the reaction S-ubiquitinyl-[E2 ubiquitin-conjugating enzyme]-L-cysteine + [acceptor protein]-L-lysine = [E2 ubiquitin-conjugating enzyme]-L-cysteine + N(6)-ubiquitinyl-[acceptor protein]-L-lysine.. Its pathway is protein modification; protein ubiquitination. Its function is as follows. E3 ubiquitin-protein ligase that acts as a negative coregulator for LIM homeodomain transcription factors by mediating the ubiquitination and subsequent degradation of LIM cofactors LDB1 and LDB2 and by mediating the recruitment the SIN3a/histone deacetylase corepressor complex. Ubiquitination and degradation of LIM cofactors LDB1 and LDB2 allows DNA-bound LIM homeodomain transcription factors to interact with other protein partners such as RLIM. Plays a role in telomere length-mediated growth suppression by mediating the ubiquitination and degradation of TERF1. By targeting ZFP42 for degradation, acts as an activator of random inactivation of X chromosome in the embryo, a stochastic process in which one X chromosome is inactivated to minimize sex-related dosage differences of X-encoded genes in somatic cells of female placental mammals. The sequence is that of E3 ubiquitin-protein ligase RLIM (Rlim) from Mus musculus (Mouse).